A 284-amino-acid polypeptide reads, in one-letter code: 4-diphosphocytidyl-2-C-methyl-D-erythritol kinase (284 aa).

The active site involves lysine 10. Residue 95-105 (PVAAGLGGGSS) coordinates ATP. Residue aspartate 137 is part of the active site.

Belongs to the GHMP kinase family. IspE subfamily.

It carries out the reaction 4-CDP-2-C-methyl-D-erythritol + ATP = 4-CDP-2-C-methyl-D-erythritol 2-phosphate + ADP + H(+). It participates in isoprenoid biosynthesis; isopentenyl diphosphate biosynthesis via DXP pathway; isopentenyl diphosphate from 1-deoxy-D-xylulose 5-phosphate: step 3/6. Catalyzes the phosphorylation of the position 2 hydroxy group of 4-diphosphocytidyl-2C-methyl-D-erythritol. The protein is 4-diphosphocytidyl-2-C-methyl-D-erythritol kinase of Levilactobacillus brevis (strain ATCC 367 / BCRC 12310 / CIP 105137 / JCM 1170 / LMG 11437 / NCIMB 947 / NCTC 947) (Lactobacillus brevis).